We begin with the raw amino-acid sequence, 175 residues long: Sec-independent protein translocase protein TatB (175 aa).

The helical transmembrane segment at Met1–Gly21 threads the bilayer. 2 disordered regions span residues Val96–Gly115 and Val153–Leu175. Positions Val160–Leu175 are enriched in basic residues.

The protein belongs to the TatB family. As to quaternary structure, the Tat system comprises two distinct complexes: a TatABC complex, containing multiple copies of TatA, TatB and TatC subunits, and a separate TatA complex, containing only TatA subunits. Substrates initially bind to the TatABC complex, which probably triggers association of the separate TatA complex to form the active translocon.

It is found in the cell inner membrane. Functionally, part of the twin-arginine translocation (Tat) system that transports large folded proteins containing a characteristic twin-arginine motif in their signal peptide across membranes. Together with TatC, TatB is part of a receptor directly interacting with Tat signal peptides. TatB may form an oligomeric binding site that transiently accommodates folded Tat precursor proteins before their translocation. The polypeptide is Sec-independent protein translocase protein TatB (Burkholderia mallei (strain ATCC 23344)).